The primary structure comprises 395 residues: Sensor protein DltS (395 aa).

Helical transmembrane passes span F9–N29 and F136–L156. Positions D177–G387 constitute a Histidine kinase domain. A Phosphohistidine; by autocatalysis modification is found at H180.

Its subcellular location is the cell membrane. It carries out the reaction ATP + protein L-histidine = ADP + protein N-phospho-L-histidine.. In terms of biological role, member of the two-component regulatory system DltS/DltR. Regulates the expression of the dlt operon. Probably phosphorylates DltR. This Streptococcus agalactiae serotype III (strain NEM316) protein is Sensor protein DltS (dltS).